The primary structure comprises 305 residues: tRNA pseudouridine synthase B (305 aa).

D39 acts as the Nucleophile in catalysis.

The protein belongs to the pseudouridine synthase TruB family. Type 1 subfamily.

The enzyme catalyses uridine(55) in tRNA = pseudouridine(55) in tRNA. Its function is as follows. Responsible for synthesis of pseudouridine from uracil-55 in the psi GC loop of transfer RNAs. The sequence is that of tRNA pseudouridine synthase B from Staphylococcus aureus (strain MRSA252).